A 735-amino-acid chain; its full sequence is Ion-translocating oxidoreductase complex subunit C (735 aa).

2 4Fe-4S ferredoxin-type domains span residues 368–397 (MGAP…QQLY) and 407–436 (KATA…VQYF). [4Fe-4S] cluster-binding residues include Cys377, Cys380, Cys383, Cys387, Cys416, Cys419, Cys422, and Cys426. A disordered region spans residues 534-716 (QARAKQAAHP…ADPRKAAVAA (183 aa)).

This sequence belongs to the 4Fe4S bacterial-type ferredoxin family. RnfC subfamily. As to quaternary structure, the complex is composed of six subunits: RsxA, RsxB, RsxC, RsxD, RsxE and RsxG. It depends on [4Fe-4S] cluster as a cofactor.

The protein resides in the cell inner membrane. Functionally, part of a membrane-bound complex that couples electron transfer with translocation of ions across the membrane. Required to maintain the reduced state of SoxR. In Salmonella agona (strain SL483), this protein is Ion-translocating oxidoreductase complex subunit C.